We begin with the raw amino-acid sequence, 276 residues long: Bis(5'-nucleosyl)-tetraphosphatase, symmetrical (276 aa).

It belongs to the Ap4A hydrolase family.

It catalyses the reaction P(1),P(4)-bis(5'-adenosyl) tetraphosphate + H2O = 2 ADP + 2 H(+). In terms of biological role, hydrolyzes diadenosine 5',5'''-P1,P4-tetraphosphate to yield ADP. The chain is Bis(5'-nucleosyl)-tetraphosphatase, symmetrical from Dechloromonas aromatica (strain RCB).